Reading from the N-terminus, the 949-residue chain is Sensor histidine kinase RcsC (949 aa).

Residues 1–19 (MKYLASFRTTLKASRYMFR) lie on the Cytoplasmic side of the membrane. A helical transmembrane segment spans residues 20-41 (ALALVLWLLIAFSSVFYIVNAL). The Periplasmic portion of the chain corresponds to 42–313 (HQRESEIRQE…PVDKVLERIR (272 aa)). A helical transmembrane segment spans residues 314–335 (MLILNAILLNVLAGAALFTLAR). The Cytoplasmic segment spans residues 336-949 (MYERRIFIPA…AERVRKSRDS (614 aa)). The PAS domain occupies 357–425 (QFNRKIVASA…VLTSNNTNLQ (69 aa)). The Histidine kinase domain maps to 476-692 (TVSHELRTPL…QFTVRIPLYG (217 aa)). His479 bears the Phosphohistidine; by autocatalysis mark. In terms of domain architecture, ABL spans 705 to 805 (SGKRCWLAVR…ARIYLIEMES (101 aa)). The Response regulatory domain maps to 826-940 (MILVVDDHPI…VIKQTLTLYA (115 aa)). Asp875 carries the post-translational modification 4-aspartylphosphate.

The protein belongs to the RcsC family. Interacts with RcsD. Autophosphorylated. Activation probably requires a transfer of a phosphate group from a His in the transmitter domain to an Asp in the receiver domain.

Its subcellular location is the cell inner membrane. It carries out the reaction ATP + protein L-histidine = ADP + protein N-phospho-L-histidine.. Its activity is regulated as follows. The Rcs phosphorelay may be activated by RcsF. DjlA, LolA and OmpG might act as a regulator of the phosphorelay. Activity is probably up-regulated by YmgA/AriR, and possibly down-regulated by YcgZ, all 3 are connector proteins providing additional signal input into signaling system. Its function is as follows. Component of the Rcs signaling system, which controls transcription of numerous genes. RcsC functions as a membrane-associated protein kinase that phosphorylates RcsD in response to environmental signals. The phosphoryl group is then transferred to the response regulator RcsB. RcsC also has phosphatase activity. The system controls expression of genes involved in colanic acid capsule synthesis, biofilm formation and cell division. The chain is Sensor histidine kinase RcsC from Escherichia coli (strain K12).